The chain runs to 196 residues: Probable GTP-binding protein EngB (196 aa).

In terms of domain architecture, EngB-type G spans 24-196 (ELSEVALSGR…IWNLIEPYIS (173 aa)). GTP-binding positions include 32-39 (GRSNVGKS), 59-63 (GKTQT), 77-80 (DVPG), 144-147 (TKED), and 176-178 (YSS). Positions 39 and 61 each coordinate Mg(2+).

This sequence belongs to the TRAFAC class TrmE-Era-EngA-EngB-Septin-like GTPase superfamily. EngB GTPase family. Mg(2+) serves as cofactor.

Its function is as follows. Necessary for normal cell division and for the maintenance of normal septation. The chain is Probable GTP-binding protein EngB from Staphylococcus aureus (strain MW2).